A 348-amino-acid polypeptide reads, in one-letter code: Phospho-2-dehydro-3-deoxyheptonate aldolase, Trp-sensitive (348 aa).

Belongs to the class-I DAHP synthase family.

The catalysed reaction is D-erythrose 4-phosphate + phosphoenolpyruvate + H2O = 7-phospho-2-dehydro-3-deoxy-D-arabino-heptonate + phosphate. Its pathway is metabolic intermediate biosynthesis; chorismate biosynthesis; chorismate from D-erythrose 4-phosphate and phosphoenolpyruvate: step 1/7. In terms of biological role, stereospecific condensation of phosphoenolpyruvate (PEP) and D-erythrose-4-phosphate (E4P) giving rise to 3-deoxy-D-arabino-heptulosonate-7-phosphate (DAHP). This Escherichia coli (strain K12) protein is Phospho-2-dehydro-3-deoxyheptonate aldolase, Trp-sensitive (aroH).